We begin with the raw amino-acid sequence, 248 residues long: Ubiquinone biosynthesis O-methyltransferase (248 aa).

4 residues coordinate S-adenosyl-L-methionine: arginine 41, glycine 72, aspartate 93, and methionine 136.

Belongs to the methyltransferase superfamily. UbiG/COQ3 family.

It catalyses the reaction a 3-demethylubiquinol + S-adenosyl-L-methionine = a ubiquinol + S-adenosyl-L-homocysteine + H(+). The catalysed reaction is a 3-(all-trans-polyprenyl)benzene-1,2-diol + S-adenosyl-L-methionine = a 2-methoxy-6-(all-trans-polyprenyl)phenol + S-adenosyl-L-homocysteine + H(+). It participates in cofactor biosynthesis; ubiquinone biosynthesis. O-methyltransferase that catalyzes the 2 O-methylation steps in the ubiquinone biosynthetic pathway. This is Ubiquinone biosynthesis O-methyltransferase from Sinorhizobium fredii (strain NBRC 101917 / NGR234).